We begin with the raw amino-acid sequence, 275 residues long: Formamidopyrimidine-DNA glycosylase (275 aa).

The active-site Schiff-base intermediate with DNA is Pro-2. Catalysis depends on Glu-3, which acts as the Proton donor. Catalysis depends on Lys-58, which acts as the Proton donor; for beta-elimination activity. His-91, Arg-109, and Arg-154 together coordinate DNA. The FPG-type zinc finger occupies 240–274; sequence AVYERAGLPCRVCGTPIRRLVQGQRATYFCPSCQK. Arg-264 serves as the catalytic Proton donor; for delta-elimination activity.

This sequence belongs to the FPG family. As to quaternary structure, monomer. Requires Zn(2+) as cofactor.

It carries out the reaction Hydrolysis of DNA containing ring-opened 7-methylguanine residues, releasing 2,6-diamino-4-hydroxy-5-(N-methyl)formamidopyrimidine.. The catalysed reaction is 2'-deoxyribonucleotide-(2'-deoxyribose 5'-phosphate)-2'-deoxyribonucleotide-DNA = a 3'-end 2'-deoxyribonucleotide-(2,3-dehydro-2,3-deoxyribose 5'-phosphate)-DNA + a 5'-end 5'-phospho-2'-deoxyribonucleoside-DNA + H(+). Its function is as follows. Involved in base excision repair of DNA damaged by oxidation or by mutagenic agents. Acts as a DNA glycosylase that recognizes and removes damaged bases. Has a preference for oxidized purines, such as 7,8-dihydro-8-oxoguanine (8-oxoG). Has AP (apurinic/apyrimidinic) lyase activity and introduces nicks in the DNA strand. Cleaves the DNA backbone by beta-delta elimination to generate a single-strand break at the site of the removed base with both 3'- and 5'-phosphates. The sequence is that of Formamidopyrimidine-DNA glycosylase from Bordetella pertussis (strain Tohama I / ATCC BAA-589 / NCTC 13251).